Reading from the N-terminus, the 914-residue chain is Eukaryotic translation initiation factor 3 subunit C-like protein (914 aa).

Positions 1 to 44 (MSRFFTTGSDSESESSLSGEELVTKPVGGNYGKQPLLLSEDEED) are disordered. The span at 8-21 (GSDSESESSLSGEE) shows a compositional bias: low complexity. 7 positions are modified to phosphoserine: S9, S11, S13, S15, S16, S18, and S39. K99 bears the N6-acetyllysine mark. Disordered stretches follow at residues 157 to 302 (TSYK…GGEW) and 523 to 543 (QLTP…NEGE). 4 positions are modified to phosphoserine: S166, S178, S181, and S182. Positions 166–190 (SADEDAEKNEEDSEGSSDEDEDEDG) are enriched in acidic residues. Positions 199–216 (KKSEAPSGESRKFLKKMD) are enriched in basic and acidic residues. Residues 217-232 (DEDEDSEDSEDDEDWD) show a composition bias toward acidic residues. Residues 261–278 (PTTDEDKKAAEKKREDKA) are compositionally biased toward basic and acidic residues. The span at 291-300 (EEEEEDNEGG) shows a compositional bias: acidic residues. Over residues 523-532 (QLTPPEGSSK) the composition is skewed to polar residues. T525 carries the phosphothreonine modification. At K644 the chain carries N6-acetyllysine. In terms of domain architecture, PCI spans 674–850 (FHLHINLELL…QTVVMHRTEP (177 aa)). The interval 886–914 (FRDQKDGYRKNEGYMRRGGYRQQQSQTAY) is disordered. Basic and acidic residues predominate over residues 887 to 900 (RDQKDGYRKNEGYM). S910 carries the post-translational modification Phosphoserine.

It belongs to the eIF-3 subunit C family. Component of the eukaryotic translation initiation factor 3 (eIF-3) complex, which is composed of 13 subunits: EIF3A, EIF3B, EIF3C, EIF3D, EIF3E, EIF3F, EIF3G, EIF3H, EIF3I, EIF3J, EIF3K, EIF3L and EIF3M. The eIF-3 complex appears to include 3 stable modules: module A is composed of EIF3A, EIF3B, EIF3G and EIF3I; module B is composed of EIF3F, EIF3H, and EIF3M; and module C is composed of EIF3C, EIF3D, EIF3E, EIF3K and EIF3L. EIF3C of module C binds EIF3B of module A and EIF3H of module B, thereby linking the three modules. EIF3J is a labile subunit that binds to the eIF-3 complex via EIF3B. The eIF-3 complex interacts with RPS6KB1 under conditions of nutrient depletion. Mitogenic stimulation leads to binding and activation of a complex composed of MTOR and RPTOR, leading to phosphorylation and release of RPS6KB1 and binding of EIF4B to eIF-3. Post-translationally, phosphorylated. Phosphorylation is enhanced upon serum stimulation.

Its subcellular location is the cytoplasm. Functionally, component of the eukaryotic translation initiation factor 3 (eIF-3) complex, which is required for several steps in the initiation of protein synthesis. The eIF-3 complex associates with the 40S ribosome and facilitates the recruitment of eIF-1, eIF-1A, eIF-2:GTP:methionyl-tRNAi and eIF-5 to form the 43S pre-initiation complex (43S PIC). The eIF-3 complex stimulates mRNA recruitment to the 43S PIC and scanning of the mRNA for AUG recognition. The eIF-3 complex is also required for disassembly and recycling of post-termination ribosomal complexes and subsequently prevents premature joining of the 40S and 60S ribosomal subunits prior to initiation. The eIF-3 complex specifically targets and initiates translation of a subset of mRNAs involved in cell proliferation, including cell cycling, differentiation and apoptosis, and uses different modes of RNA stem-loop binding to exert either translational activation or repression. The polypeptide is Eukaryotic translation initiation factor 3 subunit C-like protein (EIF3CL) (Homo sapiens (Human)).